The following is a 307-amino-acid chain: N-acetylmuramic acid 6-phosphate etherase (307 aa).

Positions 62–225 constitute an SIS domain; that stretch reads IVLAFQKGAR…TTASMIRIGK (164 aa). The active-site Proton donor is glutamate 90. The active site involves glutamate 121.

This sequence belongs to the GCKR-like family. MurNAc-6-P etherase subfamily. In terms of assembly, homodimer.

It catalyses the reaction N-acetyl-D-muramate 6-phosphate + H2O = N-acetyl-D-glucosamine 6-phosphate + (R)-lactate. Its pathway is amino-sugar metabolism; 1,6-anhydro-N-acetylmuramate degradation. The protein operates within amino-sugar metabolism; N-acetylmuramate degradation. It functions in the pathway cell wall biogenesis; peptidoglycan recycling. In terms of biological role, specifically catalyzes the cleavage of the D-lactyl ether substituent of MurNAc 6-phosphate, producing GlcNAc 6-phosphate and D-lactate. Together with AnmK, is also required for the utilization of anhydro-N-acetylmuramic acid (anhMurNAc) either imported from the medium or derived from its own cell wall murein, and thus plays a role in cell wall recycling. The protein is N-acetylmuramic acid 6-phosphate etherase of Mesorhizobium japonicum (strain LMG 29417 / CECT 9101 / MAFF 303099) (Mesorhizobium loti (strain MAFF 303099)).